The sequence spans 230 residues: Orotidine 5'-phosphate decarboxylase (230 aa).

Substrate-binding positions include aspartate 10, lysine 32, 59-68 (DLKYHDIPNT), threonine 119, arginine 180, glutamine 189, glycine 209, and arginine 210. The active-site Proton donor is the lysine 61.

This sequence belongs to the OMP decarboxylase family. Type 1 subfamily. As to quaternary structure, homodimer.

It catalyses the reaction orotidine 5'-phosphate + H(+) = UMP + CO2. It participates in pyrimidine metabolism; UMP biosynthesis via de novo pathway; UMP from orotate: step 2/2. Its function is as follows. Catalyzes the decarboxylation of orotidine 5'-monophosphate (OMP) to uridine 5'-monophosphate (UMP). The chain is Orotidine 5'-phosphate decarboxylase from Haemophilus influenzae (strain 86-028NP).